Consider the following 158-residue polypeptide: Large ribosomal subunit protein uL15 (158 aa).

Disordered regions lie at residues 1–53 and 138–158; these read MRIH…FEGG and ESAG…SNNE. The span at 23 to 35 shows a compositional bias: gly residues; it reads ISAGQGASGGFGM. Positions 145-158 are enriched in polar residues; the sequence is QDLSDTSNAPSNNE.

This sequence belongs to the universal ribosomal protein uL15 family. In terms of assembly, part of the 50S ribosomal subunit.

Functionally, binds to the 23S rRNA. This chain is Large ribosomal subunit protein uL15, found in Crocosphaera subtropica (strain ATCC 51142 / BH68) (Cyanothece sp. (strain ATCC 51142)).